The following is a 267-amino-acid chain: PF03932 family protein CutC (267 aa).

This sequence belongs to the CutC family.

The protein resides in the cytoplasm. This chain is PF03932 family protein CutC, found in Xylella fastidiosa (strain 9a5c).